The following is a 601-amino-acid chain: Elongation factor 4 (601 aa).

The region spanning 2-184 (DLIRNFSIIA…EMIARVPPPT (183 aa)) is the tr-type G domain. GTP contacts are provided by residues 14-19 (DHGKST) and 131-134 (NKID).

Belongs to the TRAFAC class translation factor GTPase superfamily. Classic translation factor GTPase family. LepA subfamily.

The protein localises to the cell inner membrane. It carries out the reaction GTP + H2O = GDP + phosphate + H(+). Required for accurate and efficient protein synthesis under certain stress conditions. May act as a fidelity factor of the translation reaction, by catalyzing a one-codon backward translocation of tRNAs on improperly translocated ribosomes. Back-translocation proceeds from a post-translocation (POST) complex to a pre-translocation (PRE) complex, thus giving elongation factor G a second chance to translocate the tRNAs correctly. Binds to ribosomes in a GTP-dependent manner. This is Elongation factor 4 from Polynucleobacter asymbioticus (strain DSM 18221 / CIP 109841 / QLW-P1DMWA-1) (Polynucleobacter necessarius subsp. asymbioticus).